The sequence spans 117 residues: Large ribosomal subunit protein uL18 (117 aa).

The protein belongs to the universal ribosomal protein uL18 family. In terms of assembly, part of the 50S ribosomal subunit; part of the 5S rRNA/L5/L18/L25 subcomplex. Contacts the 5S and 23S rRNAs.

In terms of biological role, this is one of the proteins that bind and probably mediate the attachment of the 5S RNA into the large ribosomal subunit, where it forms part of the central protuberance. The protein is Large ribosomal subunit protein uL18 of Yersinia pseudotuberculosis serotype O:1b (strain IP 31758).